We begin with the raw amino-acid sequence, 121 residues long: Small ribosomal subunit protein uS13 (121 aa).

The tract at residues 91–121 (HRMSLPVRGQRTRTNARTRRGSRKTVAGRKK) is disordered. The segment covering 100–121 (QRTRTNARTRRGSRKTVAGRKK) has biased composition (basic residues).

This sequence belongs to the universal ribosomal protein uS13 family. Part of the 30S ribosomal subunit. Forms a loose heterodimer with protein S19. Forms two bridges to the 50S subunit in the 70S ribosome.

In terms of biological role, located at the top of the head of the 30S subunit, it contacts several helices of the 16S rRNA. In the 70S ribosome it contacts the 23S rRNA (bridge B1a) and protein L5 of the 50S subunit (bridge B1b), connecting the 2 subunits; these bridges are implicated in subunit movement. Contacts the tRNAs in the A and P-sites. This is Small ribosomal subunit protein uS13 from Prochlorococcus marinus (strain SARG / CCMP1375 / SS120).